A 681-amino-acid polypeptide reads, in one-letter code: DNA-directed RNA polymerase subunit beta' (681 aa).

Zn(2+) is bound by residues Cys-69, Cys-71, Cys-87, and Cys-90. 3 residues coordinate Mg(2+): Asp-489, Asp-491, and Asp-493.

Belongs to the RNA polymerase beta' chain family. RpoC1 subfamily. In terms of assembly, in plastids the minimal PEP RNA polymerase catalytic core is composed of four subunits: alpha, beta, beta', and beta''. When a (nuclear-encoded) sigma factor is associated with the core the holoenzyme is formed, which can initiate transcription. The cofactor is Mg(2+). Zn(2+) serves as cofactor.

The protein resides in the plastid. It localises to the chloroplast. It catalyses the reaction RNA(n) + a ribonucleoside 5'-triphosphate = RNA(n+1) + diphosphate. Its function is as follows. DNA-dependent RNA polymerase catalyzes the transcription of DNA into RNA using the four ribonucleoside triphosphates as substrates. The chain is DNA-directed RNA polymerase subunit beta' from Cycas taitungensis (Prince sago).